The primary structure comprises 159 residues: Protein A40 (159 aa).

Over 1 to 9 (MNKHKTDYA) the chain is Cytoplasmic. A helical; Signal-anchor for type II membrane protein transmembrane segment spans residues 10–30 (GYACCVICGLIVGIIFTATLL). The Extracellular segment spans residues 31 to 159 (KVVERKLVHT…TPKLHSCYTI (129 aa)). A C-type lectin domain is found at 63 to 159 (YNNKCIHLST…TPKLHSCYTI (97 aa)).

It belongs to the poxviridae A40 protein family.

It localises to the host membrane. This chain is Protein A40, found in Bos taurus (Bovine).